The sequence spans 240 residues: UDP-2,3-diacylglucosamine hydrolase (240 aa).

Mn(2+) is bound by residues aspartate 8, histidine 10, aspartate 41, asparagine 79, and histidine 114. 79-80 (NR) lines the substrate pocket. Residues aspartate 122, serine 160, asparagine 164, lysine 167, and histidine 195 each contribute to the substrate site. The Mn(2+) site is built by histidine 195 and histidine 197.

The protein belongs to the LpxH family. The cofactor is Mn(2+).

It is found in the cell inner membrane. The enzyme catalyses UDP-2-N,3-O-bis[(3R)-3-hydroxytetradecanoyl]-alpha-D-glucosamine + H2O = 2-N,3-O-bis[(3R)-3-hydroxytetradecanoyl]-alpha-D-glucosaminyl 1-phosphate + UMP + 2 H(+). It functions in the pathway glycolipid biosynthesis; lipid IV(A) biosynthesis; lipid IV(A) from (3R)-3-hydroxytetradecanoyl-[acyl-carrier-protein] and UDP-N-acetyl-alpha-D-glucosamine: step 4/6. Its function is as follows. Hydrolyzes the pyrophosphate bond of UDP-2,3-diacylglucosamine to yield 2,3-diacylglucosamine 1-phosphate (lipid X) and UMP by catalyzing the attack of water at the alpha-P atom. Involved in the biosynthesis of lipid A, a phosphorylated glycolipid that anchors the lipopolysaccharide to the outer membrane of the cell. The protein is UDP-2,3-diacylglucosamine hydrolase of Escherichia coli O7:K1 (strain IAI39 / ExPEC).